The chain runs to 150 residues: Regulatory protein RecX (150 aa).

It belongs to the RecX family.

It is found in the cytoplasm. Its function is as follows. Modulates RecA activity. This Acidithiobacillus ferrooxidans (strain ATCC 23270 / DSM 14882 / CIP 104768 / NCIMB 8455) (Ferrobacillus ferrooxidans (strain ATCC 23270)) protein is Regulatory protein RecX.